A 524-amino-acid polypeptide reads, in one-letter code: Bifunctional purine biosynthesis protein PurH (524 aa).

The MGS-like domain occupies 1-145; the sequence is MIKQALLSVS…KNHRDVTVIV (145 aa).

This sequence belongs to the PurH family.

It catalyses the reaction (6R)-10-formyltetrahydrofolate + 5-amino-1-(5-phospho-beta-D-ribosyl)imidazole-4-carboxamide = 5-formamido-1-(5-phospho-D-ribosyl)imidazole-4-carboxamide + (6S)-5,6,7,8-tetrahydrofolate. The catalysed reaction is IMP + H2O = 5-formamido-1-(5-phospho-D-ribosyl)imidazole-4-carboxamide. It functions in the pathway purine metabolism; IMP biosynthesis via de novo pathway; 5-formamido-1-(5-phospho-D-ribosyl)imidazole-4-carboxamide from 5-amino-1-(5-phospho-D-ribosyl)imidazole-4-carboxamide (10-formyl THF route): step 1/1. Its pathway is purine metabolism; IMP biosynthesis via de novo pathway; IMP from 5-formamido-1-(5-phospho-D-ribosyl)imidazole-4-carboxamide: step 1/1. This Cupriavidus taiwanensis (strain DSM 17343 / BCRC 17206 / CCUG 44338 / CIP 107171 / LMG 19424 / R1) (Ralstonia taiwanensis (strain LMG 19424)) protein is Bifunctional purine biosynthesis protein PurH.